A 426-amino-acid chain; its full sequence is Chaperone SurA (426 aa).

A signal peptide spans 1–13 (MLGALFLSTAASA). PpiC domains lie at 164–265 (SEEL…KLLD) and 274–373 (RDEV…EVLG).

The protein localises to the periplasm. It catalyses the reaction [protein]-peptidylproline (omega=180) = [protein]-peptidylproline (omega=0). Its function is as follows. Chaperone involved in the correct folding and assembly of outer membrane proteins. Recognizes specific patterns of aromatic residues and the orientation of their side chains, which are found more frequently in integral outer membrane proteins. May act in both early periplasmic and late outer membrane-associated steps of protein maturation. This chain is Chaperone SurA, found in Pseudomonas fluorescens (strain ATCC BAA-477 / NRRL B-23932 / Pf-5).